The following is a 532-amino-acid chain: L-proline--[L-prolyl-carrier protein] ligase (532 aa).

A disordered region spans residues 510–532; that stretch reads KTDYRRLGLDAPPRPAAPLGTAR.

It belongs to the ATP-dependent AMP-binding enzyme family.

It catalyses the reaction holo-[peptidyl-carrier protein] + L-proline + ATP = L-prolyl-[peptidyl-carrier protein] + AMP + diphosphate. In terms of biological role, involved in the biosynthesis of undecylprodigiosin. Catalyzes the conversion of L-proline to L-prolyl-AMP and the transfer of the L-prolyl group to acyl carrier protein RedO. This Streptomyces coelicolor (strain ATCC BAA-471 / A3(2) / M145) protein is L-proline--[L-prolyl-carrier protein] ligase.